A 386-amino-acid chain; its full sequence is NADPH-dependent alkenal/one oxidoreductase, chloroplastic (386 aa).

It belongs to the zinc-containing alcohol dehydrogenase family. Quinone oxidoreductase subfamily.

It localises to the plastid. The protein localises to the chloroplast. Functionally, reduces the double bond in short-chain unsaturated carbonyls. Acts preferentially on alpha,beta-unsaturated ketones rather on alpha,beta-unsaturated aldehydes. Has no activity with (E)-2-hexenal and (E)-2-pentenal. Contributes to detoxify stromal reactive carbonyls produced under oxidative stress. The sequence is that of NADPH-dependent alkenal/one oxidoreductase, chloroplastic from Arabidopsis thaliana (Mouse-ear cress).